The chain runs to 367 residues: tRNA-specific 2-thiouridylase MnmA (367 aa).

Residues 11–18 (GLSGGVDS) and L37 each bind ATP. C99 functions as the Nucleophile in the catalytic mechanism. An intrachain disulfide couples C99 to C195. G123 is an ATP binding site. The segment at 145-147 (KDQ) is interaction with tRNA. C195 (cysteine persulfide intermediate) is an active-site residue. Positions 304 to 305 (RY) are interaction with tRNA.

Belongs to the MnmA/TRMU family.

It localises to the cytoplasm. The enzyme catalyses S-sulfanyl-L-cysteinyl-[protein] + uridine(34) in tRNA + AH2 + ATP = 2-thiouridine(34) in tRNA + L-cysteinyl-[protein] + A + AMP + diphosphate + H(+). Catalyzes the 2-thiolation of uridine at the wobble position (U34) of tRNA, leading to the formation of s(2)U34. This chain is tRNA-specific 2-thiouridylase MnmA, found in Chlorobium luteolum (strain DSM 273 / BCRC 81028 / 2530) (Pelodictyon luteolum).